We begin with the raw amino-acid sequence, 158 residues long: MDKEPITADGLESLKEELIFLKEKKRPQIVAAISEARSHGDLKENAEYHAAKEEQSHNEGRITEINDIIARANVIDVTKMSNDGKVIFGSTVDLENLDTGEKITYKIVGKDEADLQKKLIFFQSPIGRGLIGKNKNDLVEIKTPAGVKNFEIKDVKYV.

It belongs to the GreA/GreB family.

In terms of biological role, necessary for efficient RNA polymerase transcription elongation past template-encoded arresting sites. The arresting sites in DNA have the property of trapping a certain fraction of elongating RNA polymerases that pass through, resulting in locked ternary complexes. Cleavage of the nascent transcript by cleavage factors such as GreA or GreB allows the resumption of elongation from the new 3'terminus. GreA releases sequences of 2 to 3 nucleotides. The polypeptide is Transcription elongation factor GreA (Pelagibacter ubique (strain HTCC1062)).